A 109-amino-acid chain; its full sequence is DNA-binding protein Mpal_0536 (109 aa).

Residues 14-35 are disordered; the sequence is MAQLQSQQMDQQQMDEEKQRAK. Over residues 16–25 the composition is skewed to low complexity; it reads QLQSQQMDQQ.

It belongs to the PDCD5 family.

The protein is DNA-binding protein Mpal_0536 of Methanosphaerula palustris (strain ATCC BAA-1556 / DSM 19958 / E1-9c).